Here is a 142-residue protein sequence, read N- to C-terminus: Required for drug-induced death protein 1 (142 aa).

Disordered regions lie at residues Met-1–Ala-32 and Glu-46–Ala-66. Residues Val-116–Val-138 traverse the membrane as a helical segment.

The protein localises to the membrane. Its function is as follows. Regulates drug efflux through modulation of ABCB1 localization and activity. The protein is Required for drug-induced death protein 1 of Homo sapiens (Human).